The sequence spans 206 residues: Protein Nef (206 aa).

Residue Gly-2 is the site of N-myristoyl glycine; by host attachment. Ser-6 carries the post-translational modification Phosphoserine; by host. Residues 62-65 (QNEE) are acidic; interacts with host PACS1 and PACS2; stabilizes the interaction of NEF/MHC-I with host AP1M1; necessary for MHC-I internalization. Positions 69–78 (PVRPQVPLRP) are SH3-binding; interaction with Src family tyrosine kinases. The short motif at 72–75 (PQVP) is the PxxP; stabilizes the interaction of NEF/MHC-I with host AP1M1; necessary for MHC-I internalization element. The interval 108–124 (EILDLWVYHTQGFFPDW) is mediates dimerization, Nef-PTE1 interaction. Residues 148–180 (LEPEEVERANEGDNNILLHPICQHGQEDEAREV) form a binding to ATP6V1H region. A Dileucine internalization motif; necessary for CD4 internalization motif is present at residues 164 to 165 (LL). The short motif at 174 to 175 (ED) is the Diacidic; necessary for CD4 internalization element.

It belongs to the lentivirus primate group Nef protein family. Monomer; cytosolic form. Homodimer; membrane bound form. Interacts with Nef associated p21-activated kinase (PAK2); this interaction activates PAK2. Associates with the Nef-MHC-I-AP1 complex; this complex is required for MHC-I internalization. Interacts (via C-terminus) with host PI3-kinase. Interacts with host PACS1; this interaction seems to be weak. Interacts with host PACS2. Interacts with host LCK and MAPK3; these interactions inhibit the kinase activity of the latter. Interacts with host ATP6V1H; this interaction may play a role in CD4 endocytosis. Associates with the CD4-Nef-AP2 complex; this complex is required for CD4 internalization. Interacts with host AP2 subunit alpha and AP2 subunit sigma2. Interacts with TCR-zeta chain; this interaction up-regulates the Fas ligand (FasL) surface expression. Interacts with host HCK, LYN, and SRC; these interactions activate the Src family kinases. Interacts with MAP3K5; this interaction inhibits the Fas and TNFR-mediated death signals. Interacts with beta-COP and PTE1. Interacts with human RACK1; this increases Nef phosphorylation by PKC. Interacts with TP53; this interaction decreases the half-life of TP53, protecting the infected cell against p53-mediated apoptosis. Post-translationally, the virion-associated Nef proteins are cleaved by the viral protease to release the soluble C-terminal core protein. Nef is probably cleaved concomitantly with viral structural proteins on maturation of virus particles. Myristoylated. In terms of processing, phosphorylated on serine residues, probably by host PKCdelta and theta.

It localises to the host cell membrane. The protein localises to the virion. The protein resides in the secreted. Its subcellular location is the host Golgi apparatus membrane. Its function is as follows. Factor of infectivity and pathogenicity, required for optimal virus replication. Alters numerous pathways of T-lymphocyte function and down-regulates immunity surface molecules in order to evade host defense and increase viral infectivity. Alters the functionality of other immunity cells, like dendritic cells, monocytes/macrophages and NK cells. In terms of biological role, in infected CD4(+) T-lymphocytes, down-regulates the surface MHC-I, mature MHC-II, CD4, CD28, CCR5 and CXCR4 molecules. Mediates internalization and degradation of host CD4 through the interaction of with the cytoplasmic tail of CD4, the recruitment of AP-2 (clathrin adapter protein complex 2), internalization through clathrin coated pits, and subsequent transport to endosomes and lysosomes for degradation. Diverts host MHC-I molecules to the trans-Golgi network-associated endosomal compartments by an endocytic pathway to finally target them for degradation. MHC-I down-regulation may involve AP-1 (clathrin adapter protein complex 1) or possibly Src family kinase-ZAP70/Syk-PI3K cascade recruited by PACS2. In consequence infected cells are masked for immune recognition by cytotoxic T-lymphocytes. Decreasing the number of immune receptors also prevents reinfection by more HIV particles (superinfection). Down-regulates host SERINC3 and SERINC5 thereby excluding these proteins from the viral particles. Virion infectivity is drastically higher when SERINC3 or SERINC5 are excluded from the viral envelope, because these host antiviral proteins impair the membrane fusion event necessary for subsequent virion penetration. Bypasses host T-cell signaling by inducing a transcriptional program nearly identical to that of anti-CD3 cell activation. Interaction with TCR-zeta chain up-regulates the Fas ligand (FasL). Increasing surface FasL molecules and decreasing surface MHC-I molecules on infected CD4(+) cells send attacking cytotoxic CD8+ T-lymphocytes into apoptosis. Functionally, plays a role in optimizing the host cell environment for viral replication without causing cell death by apoptosis. Protects the infected cells from apoptosis in order to keep them alive until the next virus generation is ready to strike. Inhibits the Fas and TNFR-mediated death signals by blocking MAP3K5/ASK1. Decreases the half-life of TP53, protecting the infected cell against p53-mediated apoptosis. Inhibits the apoptotic signals regulated by the Bcl-2 family proteins through the formation of a Nef/PI3-kinase/PAK2 complex that leads to activation of PAK2 and induces phosphorylation of host BAD. Its function is as follows. Extracellular Nef protein targets CD4(+) T-lymphocytes for apoptosis by interacting with CXCR4 surface receptors. In Simian immunodeficiency virus (isolate MB66) (SIV-cpz), this protein is Protein Nef.